The sequence spans 678 residues: Pescadillo homolog (678 aa).

The segment covering 283-303 (EEEEPEEVDSEAGDEDDDDLP) has biased composition (acidic residues). Residues 283 to 316 (EEEEPEEVDSEAGDEDDDDLPVLDSGTRRRRAAA) form a disordered region. One can recognise a BRCT domain in the interval 361–451 (VCGSLFRGRV…VLMPTDLYAP (91 aa)). Residues 552 to 587 (MTRKARKMYNNMKQKEAAKQERVQQLESKKAKLAAT) adopt a coiled-coil conformation. Residues 563–678 (MKQKEAAKQE…DAAPAKRQRR (116 aa)) are disordered. The span at 564 to 581 (KQKEAAKQERVQQLESKK) shows a compositional bias: basic and acidic residues. 2 stretches are compositionally biased toward low complexity: residues 597-618 (KPAA…VAAS) and 630-661 (APAP…AAKE). Over residues 662-672 (APAKGGKDAAP) the composition is skewed to basic and acidic residues.

This sequence belongs to the pescadillo family.

The protein localises to the nucleus. The protein resides in the nucleolus. It localises to the nucleoplasm. Required for maturation of ribosomal RNAs and formation of the large ribosomal subunit. The protein is Pescadillo homolog of Chlamydomonas reinhardtii (Chlamydomonas smithii).